Reading from the N-terminus, the 274-residue chain is Secreted RxLR effector protein 144 (274 aa).

An N-terminal signal peptide occupies residues 1–20; sequence MRPWLLLLVGLSSFFALSTS. The RxLR-dEER motif lies at 49-72; sequence RKLRAFGGDTNTLKDSGKARREEK.

Belongs to the RxLR effector family.

It is found in the secreted. The protein localises to the host nucleus. The protein resides in the host cytoplasm. Functionally, secreted effector that completely suppresses the host cell death induced by cell death-inducing proteins. In Plasmopara viticola (Downy mildew of grapevine), this protein is Secreted RxLR effector protein 144.